Here is a 72-residue protein sequence, read N- to C-terminus: uncharacterized protein (72 aa).

A helical membrane pass occupies residues 33 to 53 (VCIFFSLIFFFFFFFFCVNWG).

It is found in the membrane. This is an uncharacterized protein from Dictyostelium discoideum (Social amoeba).